Consider the following 465-residue polypeptide: Iron-sulfur cluster assembly SufBD family protein SAUSA300_0822 (465 aa).

This sequence belongs to the iron-sulfur cluster assembly SufBD family.

The sequence is that of Iron-sulfur cluster assembly SufBD family protein SAUSA300_0822 from Staphylococcus aureus (strain USA300).